A 226-amino-acid chain; its full sequence is Phosphoribosylformylglycinamidine synthase subunit PurQ (226 aa).

The Glutamine amidotransferase type-1 domain maps to 3-226 (RVAVIRFPGT…FESLVEWCRS (224 aa)). The active-site Nucleophile is Cys-86. Residues His-199 and Glu-201 contribute to the active site.

In terms of assembly, part of the FGAM synthase complex composed of 1 PurL, 1 PurQ and 2 PurS subunits.

It is found in the cytoplasm. The catalysed reaction is N(2)-formyl-N(1)-(5-phospho-beta-D-ribosyl)glycinamide + L-glutamine + ATP + H2O = 2-formamido-N(1)-(5-O-phospho-beta-D-ribosyl)acetamidine + L-glutamate + ADP + phosphate + H(+). It carries out the reaction L-glutamine + H2O = L-glutamate + NH4(+). It participates in purine metabolism; IMP biosynthesis via de novo pathway; 5-amino-1-(5-phospho-D-ribosyl)imidazole from N(2)-formyl-N(1)-(5-phospho-D-ribosyl)glycinamide: step 1/2. Its function is as follows. Part of the phosphoribosylformylglycinamidine synthase complex involved in the purines biosynthetic pathway. Catalyzes the ATP-dependent conversion of formylglycinamide ribonucleotide (FGAR) and glutamine to yield formylglycinamidine ribonucleotide (FGAM) and glutamate. The FGAM synthase complex is composed of three subunits. PurQ produces an ammonia molecule by converting glutamine to glutamate. PurL transfers the ammonia molecule to FGAR to form FGAM in an ATP-dependent manner. PurS interacts with PurQ and PurL and is thought to assist in the transfer of the ammonia molecule from PurQ to PurL. In Methanopyrus kandleri (strain AV19 / DSM 6324 / JCM 9639 / NBRC 100938), this protein is Phosphoribosylformylglycinamidine synthase subunit PurQ.